The sequence spans 123 residues: Fluoride-specific ion channel FluC (123 aa).

The next 4 helical transmembrane spans lie at 5-25, 33-53, 62-82, and 94-114; these read VWVAVGGALGAIVRYFFYKFV, LATFLVNVVASFLLGFIIGAF, LKLALATGFCGALSTFSTFAA, and ITAFVYTAVSVGLGIVSVALG. Gly-72 and Ser-75 together coordinate Na(+).

This sequence belongs to the fluoride channel Fluc/FEX (TC 1.A.43) family.

Its subcellular location is the cell inner membrane. It carries out the reaction fluoride(in) = fluoride(out). With respect to regulation, na(+) is not transported, but it plays an essential structural role and its presence is essential for fluoride channel function. In terms of biological role, fluoride-specific ion channel. Important for reducing fluoride concentration in the cell, thus reducing its toxicity. This is Fluoride-specific ion channel FluC from Ignicoccus hospitalis (strain KIN4/I / DSM 18386 / JCM 14125).